A 103-amino-acid chain; its full sequence is Small ribosomal subunit protein uS10 (103 aa).

This sequence belongs to the universal ribosomal protein uS10 family. In terms of assembly, part of the 30S ribosomal subunit.

Involved in the binding of tRNA to the ribosomes. In Pseudoalteromonas atlantica (strain T6c / ATCC BAA-1087), this protein is Small ribosomal subunit protein uS10.